Reading from the N-terminus, the 876-residue chain is Alanine--tRNA ligase (876 aa).

Residues His-564, His-568, Cys-666, and His-670 each contribute to the Zn(2+) site.

This sequence belongs to the class-II aminoacyl-tRNA synthetase family. As to quaternary structure, homotetramer. Zn(2+) serves as cofactor.

It is found in the cytoplasm. The enzyme catalyses tRNA(Ala) + L-alanine + ATP = L-alanyl-tRNA(Ala) + AMP + diphosphate. Functionally, catalyzes the attachment of alanine to tRNA(Ala) in a two-step reaction: alanine is first activated by ATP to form Ala-AMP and then transferred to the acceptor end of tRNA(Ala). Also edits incorrectly charged Ser-tRNA(Ala) and Gly-tRNA(Ala) via its editing domain. This Salmonella typhimurium (strain LT2 / SGSC1412 / ATCC 700720) protein is Alanine--tRNA ligase.